The primary structure comprises 107 residues: U1-lycotoxin-Ls1k (107 aa).

An N-terminal signal peptide occupies residues 1 to 20; it reads MMKVLVVVALLVTLISYSSS. Positions 21 to 41 are excised as a propeptide; the sequence is EGIDDLEADELLSLMANEQTR. 4 cysteine pairs are disulfide-bonded: C44–C59, C51–C68, C58–C86, and C70–C84.

The protein belongs to the neurotoxin 19 (CSTX) family. 04 (U1-Lctx) subfamily. Expressed by the venom gland.

Its subcellular location is the secreted. The sequence is that of U1-lycotoxin-Ls1k from Lycosa singoriensis (Wolf spider).